We begin with the raw amino-acid sequence, 168 residues long: Large ribosomal subunit protein uL10 (168 aa).

The protein belongs to the universal ribosomal protein uL10 family. As to quaternary structure, part of the ribosomal stalk of the 50S ribosomal subunit. The N-terminus interacts with L11 and the large rRNA to form the base of the stalk. The C-terminus forms an elongated spine to which L12 dimers bind in a sequential fashion forming a multimeric L10(L12)X complex.

Functionally, forms part of the ribosomal stalk, playing a central role in the interaction of the ribosome with GTP-bound translation factors. This Levilactobacillus brevis (strain ATCC 367 / BCRC 12310 / CIP 105137 / JCM 1170 / LMG 11437 / NCIMB 947 / NCTC 947) (Lactobacillus brevis) protein is Large ribosomal subunit protein uL10.